The primary structure comprises 208 residues: uncharacterized protein (208 aa).

This is an uncharacterized protein from Bacillus subtilis (strain 168).